A 421-amino-acid chain; its full sequence is Histidine--tRNA ligase (421 aa).

Belongs to the class-II aminoacyl-tRNA synthetase family. As to quaternary structure, homodimer.

Its subcellular location is the cytoplasm. It carries out the reaction tRNA(His) + L-histidine + ATP = L-histidyl-tRNA(His) + AMP + diphosphate + H(+). This Coxiella burnetii (strain CbuG_Q212) (Coxiella burnetii (strain Q212)) protein is Histidine--tRNA ligase.